We begin with the raw amino-acid sequence, 131 residues long: Profilin-6 (131 aa).

Residues Cys-13 and Cys-115 are joined by a disulfide bond. The Involved in PIP2 interaction signature appears at 81–97 (AVIRGKKGAGGITIKKT). Position 111 is a phosphothreonine (Thr-111).

It belongs to the profilin family. Occurs in many kinds of cells as a complex with monomeric actin in a 1:1 ratio. In terms of processing, phosphorylated by MAP kinases.

The protein resides in the cytoplasm. Its subcellular location is the cytoskeleton. Its function is as follows. Binds to actin and affects the structure of the cytoskeleton. At high concentrations, profilin prevents the polymerization of actin, whereas it enhances it at low concentrations. This chain is Profilin-6, found in Phleum pratense (Common timothy).